The chain runs to 269 residues: Putative biopolymer transport protein ExbD (269 aa).

The Cytoplasmic portion of the chain corresponds to 1 to 40 (MASSPKAPKSHRKFQSIYHPTRPLSLWQDNQHDQGEVRIE). The chain crosses the membrane as a helical span at residues 41-61 (IIPLIDVVFCILTFFILGAVG). At 62-269 (LSRQQAISLD…GNTVPSAPQQ (208 aa)) the chain is on the periplasmic side. Positions 190–269 (NGANPGMSNF…GNTVPSAPQQ (80 aa)) are disordered. The span at 193-204 (NPGMSNFNNSNP) shows a compositional bias: low complexity.

It belongs to the ExbD/TolR family.

Its subcellular location is the cell inner membrane. This Synechocystis sp. (strain ATCC 27184 / PCC 6803 / Kazusa) protein is Putative biopolymer transport protein ExbD.